The sequence spans 116 residues: Large ribosomal subunit protein bL19 (116 aa).

Belongs to the bacterial ribosomal protein bL19 family.

Functionally, this protein is located at the 30S-50S ribosomal subunit interface and may play a role in the structure and function of the aminoacyl-tRNA binding site. The chain is Large ribosomal subunit protein bL19 from Azotobacter vinelandii (strain DJ / ATCC BAA-1303).